Consider the following 172-residue polypeptide: Adenine phosphoribosyltransferase (172 aa).

This sequence belongs to the purine/pyrimidine phosphoribosyltransferase family. Homodimer.

It localises to the cytoplasm. The catalysed reaction is AMP + diphosphate = 5-phospho-alpha-D-ribose 1-diphosphate + adenine. Its pathway is purine metabolism; AMP biosynthesis via salvage pathway; AMP from adenine: step 1/1. Functionally, catalyzes a salvage reaction resulting in the formation of AMP, that is energically less costly than de novo synthesis. The sequence is that of Adenine phosphoribosyltransferase from Methanococcus maripaludis (strain C5 / ATCC BAA-1333).